Reading from the N-terminus, the 540-residue chain is Fumonisin B1 esterase (540 aa).

S240 serves as the catalytic Acyl-ester intermediate. Residues E356 and H448 each act as charge relay system in the active site. The segment at 521–540 is disordered; that stretch reads QVGSGEGLGVSPSKACQPSK.

The protein belongs to the type-B carboxylesterase/lipase family.

It catalyses the reaction fumonisin B1 + 2 H2O = 2 tricarballylate + (2S,3S,5R,10R,12S,14S,15R,16R)-2-amino-12,16-dimethylicosane-3,5,10,14,15-pentol + 2 H(+). Its function is as follows. Involved in degradation of fumonisin B1. Catalyzes the hydrolysis of fumonisin B1 (FB1) to aminopentol (HFB1). The chain is Fumonisin B1 esterase (fumD) from Sphingopyxis macrogoltabida (Sphingomonas macrogoltabidus).